The primary structure comprises 263 residues: Protein MARD1 (263 aa).

An FLZ-type zinc finger spans residues 219-263 (SFLSRCFTCKKNLDQKQDIYIYRGEKGFCSSECRYQEMLLDQMET).

Belongs to the FLZ family. Interacts with KIN10 and KIN11 via its FLZ-type zinc finger domain. Interacts with KINB1 and KINB2 via its N-terminal part. Interacts with TZF4, TZF5 and TZF6. Interacts with MPK3 and MPK6.

The protein localises to the cytoplasm. Its subcellular location is the stress granule. It localises to the P-body. Functionally, may act as an adapter to facilitate the interaction of SnRK1 complex with effector proteins, conferring tissue- and stimulus-type specific differences in the SnRK1 regulation pathway. Involved in seed dormancy control. The protein is Protein MARD1 of Arabidopsis thaliana (Mouse-ear cress).